Consider the following 108-residue polypeptide: uncharacterized protein (108 aa).

The tract at residues 81–108 (FKCLDSPPPVPPSSSQGEDEENTVDSQY) is disordered. Residues 97 to 108 (GEDEENTVDSQY) are compositionally biased toward acidic residues.

This is an uncharacterized protein from Saccharomyces cerevisiae (strain ATCC 204508 / S288c) (Baker's yeast).